Here is a 562-residue protein sequence, read N- to C-terminus: Wee1-like protein kinase 2 (562 aa).

Disordered stretches follow at residues 1-86 and 161-181; these read MRTA…DKGV and YRQA…DDCS. Over residues 35 to 48 the composition is skewed to polar residues; sequence HSNQRGSPVNSWRA. The 275-residue stretch at 217–491 folds into the Protein kinase domain; that stretch reads FLEIEKIGAG…AKNSLLRRCV (275 aa). ATP contacts are provided by residues 223-231 and Lys246; that span reads IGAGEFGSV. Asp344 (proton acceptor) is an active-site residue. Positions 349 and 381 each coordinate Mg(2+). Residues 494-520 adopt a coiled-coil conformation; the sequence is AAQLQKQLNVEKFKTAMLERELKAAKL.

Belongs to the protein kinase superfamily. Ser/Thr protein kinase family. WEE1 subfamily.

It localises to the nucleus. It carries out the reaction L-tyrosyl-[protein] + ATP = O-phospho-L-tyrosyl-[protein] + ADP + H(+). Functionally, oocyte-specific protein tyrosine kinase that phosphorylates and inhibits cdk1 and acts as a regulator of meiosis. Required to maintain meiotic arrest in oocytes by phosphorylating cdk1 at 'Tyr-15', leading to inhibit cdk1 activity and prevent meiotic reentry. The sequence is that of Wee1-like protein kinase 2 (wee2) from Xenopus tropicalis (Western clawed frog).